Here is a 616-residue protein sequence, read N- to C-terminus: FNIP repeat-containing protein DDB_G0290639 (616 aa).

The stretch at 239–274 forms a coiled coil; that stretch reads FENNNNNNNNNNNNNNNNNNNNNNNNNNNNNKKTEK. A compositionally biased stretch (low complexity) spans 241-269; that stretch reads NNNNNNNNNNNNNNNNNNNNNNNNNNNNN. A disordered region spans residues 241 to 270; that stretch reads NNNNNNNNNNNNNNNNNNNNNNNNNNNNNK. FNIP repeat units lie at residues 337–379, 380–421, 423–464, 466–508, 509–550, and 552–593; these read FEES…FNDG, FNQS…KLCN, FSQP…VFYD, FNQL…FSDG, FNQT…LIDS, and FQQP…ILDK.

The sequence is that of FNIP repeat-containing protein DDB_G0290639 from Dictyostelium discoideum (Social amoeba).